Reading from the N-terminus, the 552-residue chain is 4-coumarate--CoA ligase-like 3 (552 aa).

Positions 207, 208, 209, 210, 211, and 215 each coordinate ATP. A (E)-4-coumaroyl-AMP-binding site is contributed by F252. Residue R273 participates in CoA binding. Residues 275-346 (GLDDMMQAVE…EKYPTVNIFQ (72 aa)) are SBD1. Residues G324, Q346, G347, and T351 each coordinate (E)-4-coumaroyl-AMP. Residues Q346, G347, T351, D432, and R447 each coordinate ATP. The tract at residues 347 to 411 (GYALTESHGS…LKGPSISKGY (65 aa)) is SBD2. (E)-4-coumaroyl-AMP is bound by residues K449 and K453. The CoA site is built by K455 and G456. Residue K538 participates in ATP binding. The Microbody targeting signal signature appears at 550–552 (SKL).

The protein belongs to the ATP-dependent AMP-binding enzyme family. The cofactor is Mg(2+).

It localises to the peroxisome. It catalyses the reaction (E)-4-coumarate + ATP + CoA = (E)-4-coumaroyl-CoA + AMP + diphosphate. It carries out the reaction (E)-4-coumarate + ATP + H(+) = (E)-4-coumaroyl-AMP + diphosphate. The enzyme catalyses (E)-4-coumaroyl-AMP + CoA = (E)-4-coumaroyl-CoA + AMP + H(+). In terms of biological role, carboxylate--CoA ligase that may use 4-coumarate as substrate. Follows a two-step reaction mechanism, wherein the carboxylate substrate first undergoes adenylation by ATP, followed by a thioesterification in the presence of CoA to yield the final CoA thioester. This chain is 4-coumarate--CoA ligase-like 3, found in Arabidopsis thaliana (Mouse-ear cress).